The primary structure comprises 967 residues: A disintegrin and metalloproteinase with thrombospondin motifs 1 (967 aa).

Disordered stretches follow at residues 1–27 (MQRA…APGS) and 192–250 (GDVG…SIRK). The signal sequence occupies residues 1–49 (MQRAVPEGFGRRKLGSDMGNAERAPGSRSFGPVPTLLLLAAALLAVSDA). The propeptide occupies 50-252 (LGRPSEEDEE…TGTGSIRKKR (203 aa)). A Cysteine switch motif is present at residues 196 to 203 (GTCGVVDD). Cys-198 contacts Zn(2+). Positions 203–212 (DEPRPTGKAE) are enriched in basic and acidic residues. Residues 213-226 (TEDEDEGTEGEDEG) show a composition bias toward acidic residues. Residues 258 to 467 (RYVETMLVAD…GHGECLMDKP (210 aa)) form the Peptidase M12B domain. Glu-261, Asp-344, and Asp-351 together coordinate Ca(2+). 4 disulfides stabilise this stretch: Cys-333/Cys-385, Cys-362/Cys-367, Cys-379/Cys-462, and Cys-417/Cys-446. A Zn(2+)-binding site is contributed by His-401. Residue Glu-402 is part of the active site. 2 residues coordinate Zn(2+): His-405 and His-411. Ca(2+)-binding residues include Cys-462 and Asp-465. One can recognise a Disintegrin domain in the interval 476–559 (DLPGTSYDAN…DRKHFDTPFH (84 aa)). Intrachain disulfides connect Cys-488–Cys-511, Cys-499–Cys-521, Cys-506–Cys-540, and Cys-534–Cys-545. Asn-547 carries N-linked (GlcNAc...) asparagine glycosylation. The TSP type-1 1 domain maps to 559–614 (HGSWGMWGPWGDCSRTCGGGVQYTMRECDNPVPKNGGKYCEGKRVRYRSCNLEDCP). Cystine bridges form between Cys-571–Cys-608, Cys-575–Cys-613, and Cys-586–Cys-598. 2 N-linked (GlcNAc...) asparagine glycosylation sites follow: Asn-720 and Asn-764. The interval 725–849 (KKISGSVTSA…YFVKKKKESF (125 aa)) is spacer. TSP type-1 domains lie at 854–905 (TFSA…RPCA) and 908–967 (PCPQ…AECS).

It depends on Zn(2+) as a cofactor. Post-translationally, the precursor is cleaved by a furin endopeptidase. Glycosylated. Can be O-fucosylated by POFUT2 on a serine or a threonine residue found within the consensus sequence C1-X(2)-(S/T)-C2-G of the TSP type-1 repeat domains where C1 and C2 are the first and second cysteine residue of the repeat, respectively. Fucosylated repeats can then be further glycosylated by the addition of a beta-1,3-glucose residue by the glucosyltransferase, B3GALTL. Fucosylation mediates the efficient secretion of ADAMTS family members. Can also be C-glycosylated with one or two mannose molecules on tryptophan residues within the consensus sequence W-X-X-W of the TPRs, and N-glycosylated. These other glycosylations can also facilitate secretion.

The protein resides in the secreted. Its subcellular location is the extracellular space. The protein localises to the extracellular matrix. Functionally, metalloprotease which cleaves aggrecan, a cartilage proteoglycan, at the '1938-Glu-|-Leu-1939' site (within the chondroitin sulfate attachment domain), and may be involved in its turnover. Also cleaves COMP. Has angiogenic inhibitor activity. May play a critical role in follicular rupture. In Homo sapiens (Human), this protein is A disintegrin and metalloproteinase with thrombospondin motifs 1 (ADAMTS1).